A 789-amino-acid chain; its full sequence is Probable Xaa-Pro aminopeptidase SNOG_02267 (789 aa).

Residues Asp240, Asp251, Glu375, and Glu416 each contribute to the Mn(2+) site. Disordered stretches follow at residues 607 to 658 and 670 to 704; these read SMSK…TGLA and NHVS…DDAL. The span at 622-637 shows a compositional bias: polar residues; the sequence is VISQKQIRNRRSVSST. Basic and acidic residues predominate over residues 638–650; sequence ARHDLRGDRERPQ.

This sequence belongs to the peptidase M24B family. Requires Mn(2+) as cofactor.

The enzyme catalyses Release of any N-terminal amino acid, including proline, that is linked to proline, even from a dipeptide or tripeptide.. Functionally, catalyzes the removal of a penultimate prolyl residue from the N-termini of peptides. The protein is Probable Xaa-Pro aminopeptidase SNOG_02267 of Phaeosphaeria nodorum (strain SN15 / ATCC MYA-4574 / FGSC 10173) (Glume blotch fungus).